We begin with the raw amino-acid sequence, 26 residues long: Dermaseptin-J4 (26 aa).

A Valine amide modification is found at Val-26.

Expressed by the skin glands.

It is found in the secreted. Has antimicrobial activity. In Phasmahyla jandaia (Jandaia leaf frog), this protein is Dermaseptin-J4.